The primary structure comprises 286 residues: 3-hydroxyanthranilate 3,4-dioxygenase (286 aa).

A domain A (catalytic) region spans residues 1–160; the sequence is MERRVRVKSW…SEQYRTGKPN (160 aa). An O2-binding site is contributed by Arg43. 3 residues coordinate Fe cation: His47, Glu53, and His91. Glu53 contributes to the substrate binding site. 2 residues coordinate substrate: Arg95 and Glu105. The tract at residues 161–177 is linker; the sequence is PDQLLKELPFPLNTRSI. Residues 178-286 form a domain B region; that stretch reads MKPMSLKAWL…QDPARKKPWW (109 aa).

It belongs to the 3-HAO family. Monomer. It depends on Fe(2+) as a cofactor.

The protein localises to the cytoplasm. It localises to the cytosol. The catalysed reaction is 3-hydroxyanthranilate + O2 = (2Z,4Z)-2-amino-3-carboxymuconate 6-semialdehyde. It functions in the pathway cofactor biosynthesis; NAD(+) biosynthesis; quinolinate from L-kynurenine: step 3/3. Functionally, catalyzes the oxidative ring opening of 3-hydroxyanthranilate to 2-amino-3-carboxymuconate semialdehyde, which spontaneously cyclizes to quinolinate. The chain is 3-hydroxyanthranilate 3,4-dioxygenase (Haao) from Mus musculus (Mouse).